A 441-amino-acid polypeptide reads, in one-letter code: DILAAFRVTPQPGVPPEEAGAAVAAESSTGTWTTVWTDGLTSLDRYKGRCYHIDAVPGEEDQFIAYVAYPLDLFEEGSVTNMLTSIVGNVFGFKALRALRLEDLRIPPAYVKTFQGPPHGIQVERDKLNKYGRPLLGCTIKPKLGLSAKNYGRAVYECLRGGLDFTKDDENVNSQPFMRWRDRFLFCAEAIFKSQAETGEIKGHYLNATAGTCEEMYKRAIFARELGVPIVMHDYLTGGFTANTSLAHYCRDNGLLLHIHXAMHAVIDRQKNHGMHFRVLAKALRMSGGDHIHAGTVVGKLEGERDITLGFVDLLRDDFIEKDRSRGIYFTQDWVSLPGVLXVASGGIHVWHMPALTEIFGDDSVLQFGGGTLGHPWGNAPGAVANRVALEACVQARNEGRDLAVEGNEIIREASKWSPELAAACEVWKEIRFNFKAVDTL.

The substrate site is built by Asn-89 and Thr-139. Residue Lys-141 is the Proton acceptor of the active site. Lys-143 contacts substrate. Positions 167, 169, and 170 each coordinate Mg(2+). An N6-carboxylysine modification is found at Lys-167. The Proton acceptor role is filled by His-260. Positions 261, 293, and 345 each coordinate substrate.

The protein belongs to the RuBisCO large chain family. Type I subfamily. Heterohexadecamer of 8 large chains and 8 small chains; disulfide-linked. The disulfide link is formed within the large subunit homodimers. The cofactor is Mg(2+). In terms of processing, the disulfide bond which can form in the large chain dimeric partners within the hexadecamer appears to be associated with oxidative stress and protein turnover.

The protein resides in the plastid. It localises to the chloroplast. The enzyme catalyses 2 (2R)-3-phosphoglycerate + 2 H(+) = D-ribulose 1,5-bisphosphate + CO2 + H2O. It catalyses the reaction D-ribulose 1,5-bisphosphate + O2 = 2-phosphoglycolate + (2R)-3-phosphoglycerate + 2 H(+). In terms of biological role, ruBisCO catalyzes two reactions: the carboxylation of D-ribulose 1,5-bisphosphate, the primary event in carbon dioxide fixation, as well as the oxidative fragmentation of the pentose substrate in the photorespiration process. Both reactions occur simultaneously and in competition at the same active site. In Apocynum cannabinum (Hemp dogbane), this protein is Ribulose bisphosphate carboxylase large chain.